A 427-amino-acid chain; its full sequence is Transcription termination factor Rho (427 aa).

The Rho RNA-BD domain maps to 51–125 (LLFMEGVLEI…LHVEAVNGDD (75 aa)). ATP contacts are provided by residues 168–173 (GFGQRG), 180–185 (KAGKTM), and Arg-211.

Belongs to the Rho family. Homohexamer. The homohexamer assembles into an open ring structure.

In terms of biological role, facilitates transcription termination by a mechanism that involves Rho binding to the nascent RNA, activation of Rho's RNA-dependent ATPase activity, and release of the mRNA from the DNA template. The protein is Transcription termination factor Rho of Bacillus subtilis (strain 168).